The sequence spans 334 residues: Holliday junction branch migration complex subunit RuvB (334 aa).

The large ATPase domain (RuvB-L) stretch occupies residues 1–181 (MHDRLISGTE…FGIVQRLEFY (181 aa)). ATP is bound by residues isoleucine 20, arginine 21, glycine 62, lysine 65, threonine 66, threonine 67, 128–130 (EDY), arginine 171, tyrosine 181, and arginine 218. Threonine 66 contacts Mg(2+). The small ATPAse domain (RuvB-S) stretch occupies residues 182 to 252 (SVEDLTHIVT…MAQRALDMLN (71 aa)). The head domain (RuvB-H) stretch occupies residues 255-334 (KDGLDTLDRR…FGLTPPEPKN (80 aa)). Residues arginine 310 and arginine 315 each contribute to the DNA site.

Belongs to the RuvB family. Homohexamer. Forms an RuvA(8)-RuvB(12)-Holliday junction (HJ) complex. HJ DNA is sandwiched between 2 RuvA tetramers; dsDNA enters through RuvA and exits via RuvB. An RuvB hexamer assembles on each DNA strand where it exits the tetramer. Each RuvB hexamer is contacted by two RuvA subunits (via domain III) on 2 adjacent RuvB subunits; this complex drives branch migration. In the full resolvosome a probable DNA-RuvA(4)-RuvB(12)-RuvC(2) complex forms which resolves the HJ.

Its subcellular location is the cytoplasm. It carries out the reaction ATP + H2O = ADP + phosphate + H(+). Its function is as follows. The RuvA-RuvB-RuvC complex processes Holliday junction (HJ) DNA during genetic recombination and DNA repair, while the RuvA-RuvB complex plays an important role in the rescue of blocked DNA replication forks via replication fork reversal (RFR). RuvA specifically binds to HJ cruciform DNA, conferring on it an open structure. The RuvB hexamer acts as an ATP-dependent pump, pulling dsDNA into and through the RuvAB complex. RuvB forms 2 homohexamers on either side of HJ DNA bound by 1 or 2 RuvA tetramers; 4 subunits per hexamer contact DNA at a time. Coordinated motions by a converter formed by DNA-disengaged RuvB subunits stimulates ATP hydrolysis and nucleotide exchange. Immobilization of the converter enables RuvB to convert the ATP-contained energy into a lever motion, pulling 2 nucleotides of DNA out of the RuvA tetramer per ATP hydrolyzed, thus driving DNA branch migration. The RuvB motors rotate together with the DNA substrate, which together with the progressing nucleotide cycle form the mechanistic basis for DNA recombination by continuous HJ branch migration. Branch migration allows RuvC to scan DNA until it finds its consensus sequence, where it cleaves and resolves cruciform DNA. This is Holliday junction branch migration complex subunit RuvB from Acinetobacter baylyi (strain ATCC 33305 / BD413 / ADP1).